Here is a 188-residue protein sequence, read N- to C-terminus: dCTP deaminase (188 aa).

DCTP is bound by residues Lys111–Arg116, Thr135–Glu137, Gln156, Tyr170, Lys179, and Gln180. The Proton donor/acceptor role is filled by Glu137.

This sequence belongs to the dCTP deaminase family. As to quaternary structure, homotrimer.

It catalyses the reaction dCTP + H2O + H(+) = dUTP + NH4(+). It participates in pyrimidine metabolism; dUMP biosynthesis; dUMP from dCTP (dUTP route): step 1/2. Catalyzes the deamination of dCTP to dUTP. The protein is dCTP deaminase of Rickettsia felis (strain ATCC VR-1525 / URRWXCal2) (Rickettsia azadi).